The sequence spans 211 residues: tRNA (guanine-N(7)-)-methyltransferase (211 aa).

S-adenosyl-L-methionine is bound by residues Glu-44, Asp-69, Asp-96, and Asp-118. Asp-118 is an active-site residue. Lys-122 lines the substrate pocket. The tract at residues Lys-124–Arg-129 is interaction with RNA. Residues Asp-154 and Thr-191–Glu-194 each bind substrate.

It belongs to the class I-like SAM-binding methyltransferase superfamily. TrmB family.

The enzyme catalyses guanosine(46) in tRNA + S-adenosyl-L-methionine = N(7)-methylguanosine(46) in tRNA + S-adenosyl-L-homocysteine. It functions in the pathway tRNA modification; N(7)-methylguanine-tRNA biosynthesis. Functionally, catalyzes the formation of N(7)-methylguanine at position 46 (m7G46) in tRNA. In Streptococcus pyogenes serotype M18 (strain MGAS8232), this protein is tRNA (guanine-N(7)-)-methyltransferase.